We begin with the raw amino-acid sequence, 555 residues long: Formate--tetrahydrofolate ligase (555 aa).

Residue 64 to 71 (TKAGIGKT) participates in ATP binding.

It belongs to the formate--tetrahydrofolate ligase family.

The enzyme catalyses (6S)-5,6,7,8-tetrahydrofolate + formate + ATP = (6R)-10-formyltetrahydrofolate + ADP + phosphate. It functions in the pathway one-carbon metabolism; tetrahydrofolate interconversion. The chain is Formate--tetrahydrofolate ligase from Parabacteroides distasonis (strain ATCC 8503 / DSM 20701 / CIP 104284 / JCM 5825 / NCTC 11152).